We begin with the raw amino-acid sequence, 143 residues long: Nucleoside diphosphate kinase (143 aa).

Lys11, Phe59, Arg87, Thr93, Arg104, and Asn114 together coordinate ATP. The active-site Pros-phosphohistidine intermediate is the His117.

It belongs to the NDK family. In terms of assembly, homotetramer. Mg(2+) serves as cofactor.

It is found in the cytoplasm. It catalyses the reaction a 2'-deoxyribonucleoside 5'-diphosphate + ATP = a 2'-deoxyribonucleoside 5'-triphosphate + ADP. It carries out the reaction a ribonucleoside 5'-diphosphate + ATP = a ribonucleoside 5'-triphosphate + ADP. Functionally, major role in the synthesis of nucleoside triphosphates other than ATP. The ATP gamma phosphate is transferred to the NDP beta phosphate via a ping-pong mechanism, using a phosphorylated active-site intermediate. The polypeptide is Nucleoside diphosphate kinase (Alteromonas mediterranea (strain DSM 17117 / CIP 110805 / LMG 28347 / Deep ecotype)).